Here is a 61-residue protein sequence, read N- to C-terminus: Large ribosomal subunit protein bL32 (61 aa).

Basic residues predominate over residues 1–16; the sequence is MPTPKKKTSRSKRDMR. Positions 1–47 are disordered; it reads MPTPKKKTSRSKRDMRRSHDGLTAPAIAVEKKTGELVRPHRAHKGAD. The span at 29-38 shows a compositional bias: basic and acidic residues; sequence VEKKTGELVR.

The protein belongs to the bacterial ribosomal protein bL32 family.

The chain is Large ribosomal subunit protein bL32 from Bdellovibrio bacteriovorus (strain ATCC 15356 / DSM 50701 / NCIMB 9529 / HD100).